Reading from the N-terminus, the 356-residue chain is S-adenosylmethionine:tRNA ribosyltransferase-isomerase (356 aa).

It belongs to the QueA family. Monomer.

It is found in the cytoplasm. It catalyses the reaction 7-aminomethyl-7-carbaguanosine(34) in tRNA + S-adenosyl-L-methionine = epoxyqueuosine(34) in tRNA + adenine + L-methionine + 2 H(+). Its pathway is tRNA modification; tRNA-queuosine biosynthesis. Its function is as follows. Transfers and isomerizes the ribose moiety from AdoMet to the 7-aminomethyl group of 7-deazaguanine (preQ1-tRNA) to give epoxyqueuosine (oQ-tRNA). This is S-adenosylmethionine:tRNA ribosyltransferase-isomerase from Escherichia coli O127:H6 (strain E2348/69 / EPEC).